The sequence spans 308 residues: Homoserine kinase (308 aa).

95-105 is a binding site for ATP; the sequence is PQSRGLGSSAA.

This sequence belongs to the GHMP kinase family. Homoserine kinase subfamily.

It is found in the cytoplasm. It catalyses the reaction L-homoserine + ATP = O-phospho-L-homoserine + ADP + H(+). Its pathway is amino-acid biosynthesis; L-threonine biosynthesis; L-threonine from L-aspartate: step 4/5. Its function is as follows. Catalyzes the ATP-dependent phosphorylation of L-homoserine to L-homoserine phosphate. The sequence is that of Homoserine kinase from Corynebacterium jeikeium (strain K411).